Reading from the N-terminus, the 117-residue chain is Large ribosomal subunit protein bL20 (117 aa).

The protein belongs to the bacterial ribosomal protein bL20 family.

Its function is as follows. Binds directly to 23S ribosomal RNA and is necessary for the in vitro assembly process of the 50S ribosomal subunit. It is not involved in the protein synthesizing functions of that subunit. The chain is Large ribosomal subunit protein bL20 from Leptospira borgpetersenii serovar Hardjo-bovis (strain JB197).